A 507-amino-acid chain; its full sequence is Dolichyl pyrophosphate Man9GlcNAc2 alpha-1,3-glucosyltransferase (507 aa).

The Cytoplasmic segment spans residues Met1 to Lys3. The chain crosses the membrane as a helical span at residues Trp4–Gly24. At Ser25–Thr114 the chain is on the lumenal side. The N-linked (GlcNAc...) asparagine glycan is linked to Asn59. The helical transmembrane segment at Thr115 to Leu135 threads the bilayer. The Cytoplasmic portion of the chain corresponds to Lys136–Lys143. A helical membrane pass occupies residues Val144–Phe164. The Lumenal portion of the chain corresponds to Gln165–Ser168. The helical transmembrane segment at Val169 to Gly189 threads the bilayer. Residues Ser190–Lys226 lie on the Cytoplasmic side of the membrane. Residues Gly227–Leu247 traverse the membrane as a helical segment. At Pro248–Gln297 the chain is on the lumenal side. Residues Leu298–Val318 form a helical membrane-spanning segment. At Gln319–Leu338 the chain is on the cytoplasmic side. The helical transmembrane segment at Phe339–Ile359 threads the bilayer. At Asn360–Glu361 the chain is on the lumenal side. A helical transmembrane segment spans residues Val362–Leu382. The Cytoplasmic portion of the chain corresponds to Lys383–Leu387. Residues Leu388–Phe408 traverse the membrane as a helical segment. Topologically, residues Glu409–Ser441 are lumenal. The helical transmembrane segment at Leu442–Pro462 threads the bilayer. Residues Pro463–Ser473 lie on the Cytoplasmic side of the membrane. Residues Val474–Leu494 form a helical membrane-spanning segment. Residues Trp495 to Ser507 are Lumenal-facing.

Belongs to the ALG6/ALG8 glucosyltransferase family.

The protein localises to the endoplasmic reticulum membrane. The catalysed reaction is an alpha-D-Man-(1-&gt;2)-alpha-D-Man-(1-&gt;2)-alpha-D-Man-(1-&gt;3)-[alpha-D-Man-(1-&gt;2)-alpha-D-Man-(1-&gt;3)-[alpha-D-Man-(1-&gt;2)-alpha-D-Man-(1-&gt;6)]-alpha-D-Man-(1-&gt;6)]-beta-D-Man-(1-&gt;4)-beta-D-GlcNAc-(1-&gt;4)-alpha-D-GlcNAc-diphospho-di-trans,poly-cis-dolichol + a di-trans,poly-cis-dolichyl beta-D-glucosyl phosphate = an alpha-D-Glc-(1-&gt;3)-alpha-D-Man-(1-&gt;2)-alpha-D-Man-(1-&gt;2)-alpha-D-Man-(1-&gt;3)-[alpha-D-Man-(1-&gt;2)-alpha-D-Man-(1-&gt;3)-[alpha-D-Man-(1-&gt;2)-alpha-D-Man-(1-&gt;6)]-alpha-D-Man-(1-&gt;6)]-beta-D-Man-(1-&gt;4)-beta-D-GlcNAc-(1-&gt;4)-alpha-D-GlcNAc-diphospho-di-trans,poly-cis-dolichol + a di-trans,poly-cis-dolichyl phosphate + H(+). The protein operates within protein modification; protein glycosylation. Dolichyl pyrophosphate Man9GlcNAc2 alpha-1,3-glucosyltransferase that operates in the biosynthetic pathway of dolichol-linked oligosaccharides, the glycan precursors employed in protein asparagine (N)-glycosylation. The assembly of dolichol-linked oligosaccharides begins on the cytosolic side of the endoplasmic reticulum membrane and finishes in its lumen. The sequential addition of sugars to dolichol pyrophosphate produces dolichol-linked oligosaccharides containing fourteen sugars, including two GlcNAcs, nine mannoses and three glucoses. Once assembled, the oligosaccharide is transferred from the lipid to nascent proteins by oligosaccharyltransferases. In the lumen of the endoplasmic reticulum, adds the first glucose residue from dolichyl phosphate glucose (Dol-P-Glc) onto the lipid-linked oligosaccharide intermediate Man(9)GlcNAc(2)-PP-Dol to produce Glc(1)Man(9)GlcNAc(2)-PP-Dol. Glc(1)Man(9)GlcNAc(2)-PP-Dol is a substrate for ALG8, the following enzyme in the biosynthetic pathway. This Gallus gallus (Chicken) protein is Dolichyl pyrophosphate Man9GlcNAc2 alpha-1,3-glucosyltransferase.